The following is a 198-amino-acid chain: Dephospho-CoA kinase (198 aa).

In terms of domain architecture, DPCK spans 4–198 (IIGITGGIAS…DSQLRRLQNE (195 aa)). Position 12–17 (12–17 (ASGKST)) interacts with ATP.

This sequence belongs to the CoaE family.

The protein localises to the cytoplasm. The enzyme catalyses 3'-dephospho-CoA + ATP = ADP + CoA + H(+). Its pathway is cofactor biosynthesis; coenzyme A biosynthesis; CoA from (R)-pantothenate: step 5/5. Functionally, catalyzes the phosphorylation of the 3'-hydroxyl group of dephosphocoenzyme A to form coenzyme A. In Streptococcus mutans serotype c (strain ATCC 700610 / UA159), this protein is Dephospho-CoA kinase.